The sequence spans 378 residues: Branched-chain-amino-acid aminotransferase (378 aa).

Lys213 is subject to N6-(pyridoxal phosphate)lysine.

It belongs to the class-IV pyridoxal-phosphate-dependent aminotransferase family. In terms of assembly, homodimer. The cofactor is pyridoxal 5'-phosphate.

The enzyme catalyses L-leucine + 2-oxoglutarate = 4-methyl-2-oxopentanoate + L-glutamate. It carries out the reaction L-isoleucine + 2-oxoglutarate = (S)-3-methyl-2-oxopentanoate + L-glutamate. It catalyses the reaction L-valine + 2-oxoglutarate = 3-methyl-2-oxobutanoate + L-glutamate. In terms of biological role, catalyzes the first reaction in the catabolism of the essential branched chain amino acids leucine, isoleucine, and valine. The chain is Branched-chain-amino-acid aminotransferase (bcaA) from Dictyostelium discoideum (Social amoeba).